A 535-amino-acid chain; its full sequence is Keratin, type II cytoskeletal 79 (535 aa).

Residues 1 to 12 (MRSSVSRQTYST) are compositionally biased toward polar residues. Residues 1–52 (MRSSVSRQTYSTKGGFSSNSASGGSGSQARTSFSSVTVSRSSGSGGGAHCGP) are disordered. Positions 1-141 (MRSSVSRQTY…DPEIQRVRTQ (141 aa)) are head. The segment covering 32–42 (SFSSVTVSRSS) has biased composition (low complexity). Gly residues predominate over residues 43 to 52 (GSGGGAHCGP). Positions 142-177 (EREQIKTLNNKFASFIDKVRFLEQQNKVLETKWALL) are coil 1A. The IF rod domain maps to 142-457 (EREQIKTLNN…KLLESEESRM (316 aa)). Positions 178–198 (QEQGQNLGVTRNNLEPLFEAY) are linker 1. The segment at 199–290 (LGSMRSTLDR…QLYEMELSQV (92 aa)) is coil 1B. Positions 291–314 (QTHVSNTNVVLSMDNNRNLDLDSI) are linker 12. The tract at residues 315–453 (IAEVKAQYEL…ATYRKLLESE (139 aa)) is coil 2. The segment at 454–535 (ESRMSGECPS…TTVKTSSQRY (82 aa)) is tail.

Belongs to the intermediate filament family. In terms of assembly, heterotetramer of two type I and two type II keratins. In terms of tissue distribution, expressed in skeletal muscle, skin and scalp, but not in any other tissues or organs examined.

The polypeptide is Keratin, type II cytoskeletal 79 (KRT79) (Homo sapiens (Human)).